A 1184-amino-acid chain; its full sequence is DNA-directed RNA polymerase subunit beta (1184 aa).

It belongs to the RNA polymerase beta chain family. The RNAP catalytic core consists of 2 alpha, 1 beta, 1 beta' and 1 omega subunit. When a sigma factor is associated with the core the holoenzyme is formed, which can initiate transcription.

The enzyme catalyses RNA(n) + a ribonucleoside 5'-triphosphate = RNA(n+1) + diphosphate. In terms of biological role, DNA-dependent RNA polymerase catalyzes the transcription of DNA into RNA using the four ribonucleoside triphosphates as substrates. This chain is DNA-directed RNA polymerase subunit beta, found in Fusobacterium nucleatum subsp. nucleatum (strain ATCC 25586 / DSM 15643 / BCRC 10681 / CIP 101130 / JCM 8532 / KCTC 2640 / LMG 13131 / VPI 4355).